Here is a 344-residue protein sequence, read N- to C-terminus: Sorting nexin-16 (344 aa).

Over residues 1-10 (MATPYVPVPM) the composition is skewed to pro residues. Disordered regions lie at residues 1 to 66 (MATP…NTSS) and 81 to 107 (ASSI…EDRP). Positions 14–26 (NSASSFTTNRNQR) are enriched in polar residues. The segment covering 27-40 (SSSFGSVSTSSNSS) has biased composition (low complexity). A compositionally biased stretch (polar residues) spans 41 to 66 (KGQLEDSNMGNFKQTSVPDQMDNTSS). The region spanning 105-218 (DRPSTPTILG…EFLCLDDPPG (114 aa)) is the PX domain. The a 1,2-diacyl-sn-glycero-3-phospho-(1D-myo-inositol-3-phosphate) site is built by Arg-144, Thr-146, and Arg-184. Ser-222 is subject to Phosphoserine. A coiled-coil region spans residues 223–278 (LEESRAFCETLEETNYRLQKELLEKQKEMESLKKLLSEKQLHIDTLENRIRTLSLE).

The protein belongs to the sorting nexin family. As to quaternary structure, homooligomer. Interacts with EGFR. In terms of tissue distribution, detected in placenta, lung, liver,heart and pancreas.

The protein localises to the early endosome membrane. It localises to the late endosome membrane. The protein resides in the cytoplasm. Its subcellular location is the lysosome. In terms of biological role, may be involved in several stages of intracellular trafficking. Plays a role in protein transport from early to late endosomes. Plays a role in protein transport to the lysosome. Promotes degradation of EGFR after EGF signaling. Plays a role in intracellular transport of vesicular stomatitis virus nucleocapsids from the endosome to the cytoplasm. The protein is Sorting nexin-16 (SNX16) of Homo sapiens (Human).